The sequence spans 300 residues: Recombination-associated protein RdgC (300 aa).

It belongs to the RdgC family.

It localises to the cytoplasm. The protein resides in the nucleoid. Functionally, may be involved in recombination. This is Recombination-associated protein RdgC from Janthinobacterium sp. (strain Marseille) (Minibacterium massiliensis).